Here is a 530-residue protein sequence, read N- to C-terminus: Bifunctional purine biosynthesis protein PurH (530 aa).

Positions 1-148 (MNNARPIRRA…KNHKDVTIVV (148 aa)) constitute an MGS-like domain.

This sequence belongs to the PurH family.

It carries out the reaction (6R)-10-formyltetrahydrofolate + 5-amino-1-(5-phospho-beta-D-ribosyl)imidazole-4-carboxamide = 5-formamido-1-(5-phospho-D-ribosyl)imidazole-4-carboxamide + (6S)-5,6,7,8-tetrahydrofolate. It catalyses the reaction IMP + H2O = 5-formamido-1-(5-phospho-D-ribosyl)imidazole-4-carboxamide. It functions in the pathway purine metabolism; IMP biosynthesis via de novo pathway; 5-formamido-1-(5-phospho-D-ribosyl)imidazole-4-carboxamide from 5-amino-1-(5-phospho-D-ribosyl)imidazole-4-carboxamide (10-formyl THF route): step 1/1. Its pathway is purine metabolism; IMP biosynthesis via de novo pathway; IMP from 5-formamido-1-(5-phospho-D-ribosyl)imidazole-4-carboxamide: step 1/1. The protein is Bifunctional purine biosynthesis protein PurH of Aliivibrio fischeri (strain MJ11) (Vibrio fischeri).